A 430-amino-acid polypeptide reads, in one-letter code: Adenylosuccinate synthetase (430 aa).

Residues 13–19 (GDEGKGK) and 41–43 (GHT) each bind GTP. The Proton acceptor role is filled by D14. Mg(2+) is bound by residues D14 and G41. Residues 14 to 17 (DEGK), 39 to 42 (NAGH), T130, R144, Q225, T240, and R304 each bind IMP. H42 (proton donor) is an active-site residue. 300 to 306 (STTGRAR) contacts substrate. GTP-binding positions include R306, 332 to 334 (KLD), and 414 to 416 (STG).

This sequence belongs to the adenylosuccinate synthetase family. In terms of assembly, homodimer. Mg(2+) serves as cofactor.

The protein resides in the cytoplasm. It catalyses the reaction IMP + L-aspartate + GTP = N(6)-(1,2-dicarboxyethyl)-AMP + GDP + phosphate + 2 H(+). The protein operates within purine metabolism; AMP biosynthesis via de novo pathway; AMP from IMP: step 1/2. Plays an important role in the de novo pathway of purine nucleotide biosynthesis. Catalyzes the first committed step in the biosynthesis of AMP from IMP. The polypeptide is Adenylosuccinate synthetase (Pseudomonas entomophila (strain L48)).